Consider the following 464-residue polypeptide: Protein FAM90A8 (464 aa).

3 disordered regions span residues 1–42, 69–389, and 415–437; these read MMAR…DPRL, VPAT…HDGA, and HSPE…SEAP. 2 stretches are compositionally biased toward basic and acidic residues: residues 74-89 and 97-114; these read GKKE…KPRG and NKDK…DPQR. Residues 180–197 are compositionally biased toward low complexity; that stretch reads LASLSPLRKASLSSSSSL.

Belongs to the FAM90 family.

This is Protein FAM90A8 (FAM90A8) from Homo sapiens (Human).